The following is a 544-amino-acid chain: Methionine--tRNA ligase (544 aa).

A 'HIGH' region motif is present at residues 10-20 (PYANGSLHLGH). The Zn(2+) site is built by cysteine 141, cysteine 144, cysteine 153, and cysteine 156. The short motif at 329–333 (KLSTS) is the 'KMSKS' region element. An ATP-binding site is contributed by threonine 332.

Belongs to the class-I aminoacyl-tRNA synthetase family. MetG type 1 subfamily. Monomer. Zn(2+) is required as a cofactor.

The protein resides in the cytoplasm. It carries out the reaction tRNA(Met) + L-methionine + ATP = L-methionyl-tRNA(Met) + AMP + diphosphate. In terms of biological role, is required not only for elongation of protein synthesis but also for the initiation of all mRNA translation through initiator tRNA(fMet) aminoacylation. In Bacillus cereus (strain B4264), this protein is Methionine--tRNA ligase.